Consider the following 232-residue polypeptide: Ubiquinone biosynthesis O-methyltransferase (232 aa).

S-adenosyl-L-methionine contacts are provided by Arg-36, Gly-55, Asp-76, and Met-120.

Belongs to the methyltransferase superfamily. UbiG/COQ3 family.

It catalyses the reaction a 3-demethylubiquinol + S-adenosyl-L-methionine = a ubiquinol + S-adenosyl-L-homocysteine + H(+). It carries out the reaction a 3-(all-trans-polyprenyl)benzene-1,2-diol + S-adenosyl-L-methionine = a 2-methoxy-6-(all-trans-polyprenyl)phenol + S-adenosyl-L-homocysteine + H(+). The protein operates within cofactor biosynthesis; ubiquinone biosynthesis. In terms of biological role, O-methyltransferase that catalyzes the 2 O-methylation steps in the ubiquinone biosynthetic pathway. The polypeptide is Ubiquinone biosynthesis O-methyltransferase (Burkholderia vietnamiensis (strain G4 / LMG 22486) (Burkholderia cepacia (strain R1808))).